A 130-amino-acid chain; its full sequence is UPF0102 protein SCO5602 (130 aa).

This sequence belongs to the UPF0102 family.

The chain is UPF0102 protein SCO5602 from Streptomyces coelicolor (strain ATCC BAA-471 / A3(2) / M145).